The sequence spans 89 residues: UPF0213 protein HQ_3675A (89 aa).

The GIY-YIG domain occupies 3–78 (DYHYVYIVEC…KSYTREKKQQ (76 aa)).

It belongs to the UPF0213 family.

The chain is UPF0213 protein HQ_3675A from Haloquadratum walsbyi (strain DSM 16790 / HBSQ001).